Here is an 868-residue protein sequence, read N- to C-terminus: Cytosolic phospholipase A2 epsilon (868 aa).

The interval 1–46 (MSLQASEGCPGLGTNVFVPQSPQTDEEGSRSGRSFSEFEDTQDLDT) is disordered. The C2 domain maps to 46-170 (TPGLPPFCPM…CFRKKTHVKF (125 aa)). Residues D84, D90, D140, D142, and D148 each contribute to the Ca(2+) site. The PLA2c domain maps to 324–856 (PCPETLDVRL…TLLQALRLAV (533 aa)). S412 serves as the catalytic Nucleophile. Residue D700 is the Proton acceptor of the active site. S800 is subject to Phosphoserine. Residues 857-868 (EKKKRLKGQCPS) form a required for localization at membrane structures region.

It depends on Ca(2+) as a cofactor.

The protein localises to the cytoplasm. Its subcellular location is the cytosol. The protein resides in the early endosome membrane. It is found in the lysosome membrane. It localises to the cell membrane. It carries out the reaction a 1,2-diacyl-sn-glycero-3-phosphoethanolamine + a 1,2-diacyl-sn-glycero-3-phosphocholine = an N-acyl-1,2-diacyl-sn-glycero-3-phosphoethanolamine + a 2-acyl-sn-glycero-3-phosphocholine + H(+). The enzyme catalyses 1-hexadecanoyl-2-octadecanoyl-sn-glycero-3-phosphocholine + 1,2-di-(9Z-octadecenoyl)-sn-glycero-3-phosphoethanolamine = 2-octadecanoyl-sn-glycero-3-phosphocholine + N-hexadecanoyl-1,2-di-(9Z-octadecenoyl)-sn-glycero-3-phosphoethanolamine + H(+). It catalyses the reaction 1-octadecanoyl-2-hexadecanoyl-sn-glycero-3-phosphocholine + 1,2-di-(9Z-octadecenoyl)-sn-glycero-3-phosphoethanolamine = N-octadecanoyl-1,2-di-(9Z-octadecenoyl)-sn-glycero-3-phosphoethanolamine + 2-hexadecanoyl-sn-glycero-3-phosphocholine + H(+). The catalysed reaction is 1,2-di-(9Z-octadecenoyl)-sn-glycero-3-phosphoethanolamine + 1,2-dihexadecanoyl-sn-glycero-3-phosphocholine = N-hexadecanoyl-1,2-di-(9Z-octadecenoyl)-sn-glycero-3-phosphoethanolamine + 2-hexadecanoyl-sn-glycero-3-phosphocholine + H(+). It carries out the reaction 1,2-di-(5Z,8Z,11Z,14Z-eicosatetraenoyl)-sn-glycero-3-phosphocholine + 1,2-di-(9Z-octadecenoyl)-sn-glycero-3-phosphoethanolamine = N-(5Z,8Z,11Z,14Z-eicosatetraenoyl)-1,2-di-(9Z-octadecenoyl)-sn-glycero-3-phosphoethanolamine + 2-(5Z,8Z,11Z,14Z)-eicosatetraenoyl-sn-glycero-3-phosphocholine + H(+). The enzyme catalyses 2 1,2-di-(9Z-octadecenoyl)-sn-glycero-3-phosphoethanolamine = N,1,2-tri-(9Z-octadecenoyl)-sn-glycero-3-phosphoethanolamine + 2-(9Z-octadecenoyl)-sn-glycero-3-phosphoethanolamine + H(+). It catalyses the reaction 1-(1Z-octadecenyl)-2-(9Z-octadecenoyl)-sn-glycero-3-phosphoethanolamine + 1,2-dihexadecanoyl-sn-glycero-3-phosphocholine = 1-O-(1Z-octadecenoyl)-2-(9Z-octadecenoyl)-sn-glycero-3-phospho-N-hexadecanoyl-ethanolamine + 2-hexadecanoyl-sn-glycero-3-phosphocholine + H(+). The catalysed reaction is a 1,2-diacyl-sn-glycero-3-phosphocholine + H2O = a 1-acyl-sn-glycero-3-phosphocholine + a fatty acid + H(+). It carries out the reaction 1-hexadecanoyl-2-(5Z,8Z,11Z,14Z-eicosatetraenoyl)-sn-glycero-3-phosphocholine + H2O = 1-hexadecanoyl-sn-glycero-3-phosphocholine + (5Z,8Z,11Z,14Z)-eicosatetraenoate + H(+). The enzyme catalyses 1-hexadecanoyl-sn-glycero-3-phosphocholine + H2O = sn-glycerol 3-phosphocholine + hexadecanoate + H(+). With respect to regulation, stimulated by cytosolic Ca(2+). Stimulated by anionic phospholipids such as phosphatidylserines, phosphatidates and phosphatidylinositols. Calcium-dependent N-acyltransferase involved in the biosynthesis of N-acyl ethanolamines (NAEs) in the brain. Transfers the sn-1 fatty acyl chain of phosphatidylcholine (fatty acyl donor) to the amine group of phosphatidylethanolamine (fatty acyl acceptor) to generate N-acyl phosphatidylethanolamine (NAPE). Similarly can use plasmenylethanolamine as a fatty acyl acceptor to form N-acyl plasmenylethanolamine (N-Acyl-PlsEt). Both NAPE and N-Acyl-PlsEt can serve as precursors of bioactive NAEs like N-arachidonoyl phosphatidylethanolamine also called anandamide. Has weak phospholipase A2 and lysophospholipase activities. Regulates intracellular membrane trafficking that requires modulation of membrane curvature as it occurs by enrichment in lysophospholipids. Promotes tubule formation involved in clathrin-independent endocytotic trafficking and cargo recycling. This Homo sapiens (Human) protein is Cytosolic phospholipase A2 epsilon.